The sequence spans 739 residues: DNA ligase (739 aa).

The tract at residues 1 to 29 (MTANRPALPTRDKAVSDLSATEASDEHAA) is disordered. NAD(+) is bound by residues 51–55 (DADYD), 100–101 (SL), and E134. The N6-AMP-lysine intermediate role is filled by K136. Residues R157, E194, K311, and K335 each coordinate NAD(+). Zn(2+)-binding residues include C440, C443, C464, and C470. The disordered stretch occupies residues 592–612 (PTEMEEASEETPPTRRRKPQG). The 78-residue stretch at 662–739 (ASTSPVSGKT…TEDEWFDLVG (78 aa)) folds into the BRCT domain.

The protein belongs to the NAD-dependent DNA ligase family. LigA subfamily. Mg(2+) is required as a cofactor. The cofactor is Mn(2+).

The catalysed reaction is NAD(+) + (deoxyribonucleotide)n-3'-hydroxyl + 5'-phospho-(deoxyribonucleotide)m = (deoxyribonucleotide)n+m + AMP + beta-nicotinamide D-nucleotide.. Its function is as follows. DNA ligase that catalyzes the formation of phosphodiester linkages between 5'-phosphoryl and 3'-hydroxyl groups in double-stranded DNA using NAD as a coenzyme and as the energy source for the reaction. It is essential for DNA replication and repair of damaged DNA. The polypeptide is DNA ligase (Azorhizobium caulinodans (strain ATCC 43989 / DSM 5975 / JCM 20966 / LMG 6465 / NBRC 14845 / NCIMB 13405 / ORS 571)).